The sequence spans 275 residues: Vitamin B12-binding protein (275 aa).

A signal peptide spans 1–19; it reads MMNKLCFALPLIFSDASFA. The region spanning 25–272 is the Fe/B12 periplasmic-binding domain; that stretch reads RIISLAPHST…EVCEHFETVR (248 aa). An intrachain disulfide couples C185 to C265.

The protein belongs to the BtuF family. In terms of assembly, the complex is composed of two ATP-binding proteins (BtuD), two transmembrane proteins (BtuC) and a solute-binding protein (BtuF).

It localises to the periplasm. Its function is as follows. Part of the ABC transporter complex BtuCDF involved in vitamin B12 import. Binds vitamin B12 and delivers it to the periplasmic surface of BtuC. This is Vitamin B12-binding protein from Vibrio campbellii (strain ATCC BAA-1116).